Reading from the N-terminus, the 239-residue chain is Protein GrpE (239 aa).

Disordered stretches follow at residues M1–N54 and S208–V239. Positions Q19–Q42 are enriched in polar residues. Over residues K43–K53 the composition is skewed to basic and acidic residues. The segment covering D228 to V239 has biased composition (acidic residues).

Belongs to the GrpE family. Homodimer.

The protein localises to the cytoplasm. In terms of biological role, participates actively in the response to hyperosmotic and heat shock by preventing the aggregation of stress-denatured proteins, in association with DnaK and GrpE. It is the nucleotide exchange factor for DnaK and may function as a thermosensor. Unfolded proteins bind initially to DnaJ; upon interaction with the DnaJ-bound protein, DnaK hydrolyzes its bound ATP, resulting in the formation of a stable complex. GrpE releases ADP from DnaK; ATP binding to DnaK triggers the release of the substrate protein, thus completing the reaction cycle. Several rounds of ATP-dependent interactions between DnaJ, DnaK and GrpE are required for fully efficient folding. The protein is Protein GrpE of Prochlorococcus marinus (strain AS9601).